The following is a 247-amino-acid chain: MSSESEKDKERLIQAAKLFFFHIRDLVSFINRFVELFNLTMKTQILPMNLNEESCIKDFFEQMIRNFKEMQLMVDGKHKQMQKEPLCSKVLTAMTSAVEKCATIAPHHTAEDMLRNIQTSGAALVLKTSHVLVNLETSLSLLMQFPIMGLRLSDLYREETKEQSDATSDATTSEKNKSPECPKATTEETLRKLQDVLSPENAHTPVEAAADELEQFVKSMEITLQVLQKSIKTMEGDIFVLTQVQGK.

A disordered region spans residues 161 to 187; it reads KEQSDATSDATTSEKNKSPECPKATTE. A compositionally biased stretch (basic and acidic residues) spans 172-187; the sequence is TSEKNKSPECPKATTE.

This is an uncharacterized protein from Mus musculus (Mouse).